We begin with the raw amino-acid sequence, 452 residues long: 1,3-beta-glucanosyltransferase gel1 (452 aa).

Residues 1–19 (MKASAVTAALAVGASTVLA) form the signal peptide. Residues Cys71 and Cys100 are joined by a disulfide bond. (1,3-beta-D-glucosyl)n is bound by residues Tyr89, Asn159, Glu160, Asp201, and Arg206. Glu160 (proton donor) is an active-site residue. 2 disulfides stabilise this stretch: Cys215–Cys345 and Cys233–Cys264. Residue Asn249 is glycosylated (N-linked (GlcNAc...) asparagine). The active-site Nucleophile is Glu261. Position 292 (Tyr292) interacts with (1,3-beta-D-glucosyl)n. Residues 325-340 (EKTSNPSGDGNYNKTG) are compositionally biased toward polar residues. The tract at residues 325–419 (EKTSNPSGDG…SGTSTSSKGA (95 aa)) is disordered. Asn337 carries N-linked (GlcNAc...) asparagine glycosylation. Residues 393–419 (STATAEPGSGSATGSSSSGTSTSSKGA) are compositionally biased toward low complexity. Residue Ala419 is the site of GPI-like-anchor amidated alanine attachment. The propeptide at 420 to 452 (AAGLTVPSLTMAPVVVGAVTLLSTVFGAGLVLL) is removed in mature form.

It belongs to the glycosyl hydrolase 72 family. In terms of processing, the GPI-like anchor contains a phosphoceramide lipid group. The anchor position has not been determined.

Its subcellular location is the cell membrane. In terms of biological role, splits internally a 1,3-beta-glucan molecule and transfers the newly generated reducing end (the donor) to the non-reducing end of another 1,3-beta-glucan molecule (the acceptor) forming a 1,3-beta linkage, resulting in the elongation of 1,3-beta-glucan chains in the cell wall. Involved in cell wall morphogenesis. This chain is 1,3-beta-glucanosyltransferase gel1 (gel1), found in Aspergillus fumigatus (strain CBS 144.89 / FGSC A1163 / CEA10) (Neosartorya fumigata).